A 437-amino-acid polypeptide reads, in one-letter code: F-box only protein 9 (437 aa).

The segment at 1–29 is disordered; it reads MAEAEEDCHSEAVREGDDDDENESPAETD. The span at 16–26 shows a compositional bias: acidic residues; sequence GDDDDENESPA. Residues 84–117 form a TPR repeat; sequence ARELFLKAVEEEQNGALYEAIKFYRRAMQLVPDI. Serine 126 bears the Phosphoserine mark. Positions 175–226 constitute an F-box domain; sequence QTHISALPMEVLMYVFRWVVSSDLDLRSLEQLSQVCRGFYICARDPEIWRLA.

In terms of assembly, part of the SCF (SKP1-CUL1-F-box) E3 ubiquitin-protein ligase complex SCF(FBXO9) composed of CUL1, SKP1, RBX1 and FBXO9. Interacts with TTI1 and TELO2; when TTI1 and TELO2 are phosphorylated by CK2.

It is found in the cytoplasm. Its pathway is protein modification; protein ubiquitination. Substrate recognition component of a SCF (SKP1-CUL1-F-box protein) E3 ubiquitin-protein ligase complex which mediates the ubiquitination and subsequent proteasomal degradation of target proteins and plays a role in several biological processes such as cell cycle, cell proliferation, or maintenance of chromosome stability. Ubiquitinates mTORC1-bound TTI1 and TELO2 when they are phosphorylated by CK2 following growth factor deprivation, leading to their degradation. In contrast, does not mediate ubiquitination of TTI1 and TELO2 when they are part of the mTORC2 complex. As a consequence, mTORC1 is inactivated to restrain cell growth and protein translation, while mTORC2 is the activated due to the relief of feedback inhibition by mTORC1. Plays a role in maintaining epithelial cell survival by regulating the turn-over of chromatin modulator PRMT4 through ubiquitination and degradation by the proteasomal pathway. Also regulates PPARgamma stability by facilitating PPARgamma/PPARG ubiquitination and thereby plays a role in adipocyte differentiation. In Bos taurus (Bovine), this protein is F-box only protein 9 (FBXO9).